A 124-amino-acid chain; its full sequence is Small ribosomal subunit protein eS25 (124 aa).

The segment covering 1 to 22 has biased composition (basic and acidic residues); that stretch reads PPKDDKKKKDAGKSAKKDKDPV. Residues 1-37 are disordered; the sequence is PPKDDKKKKDAGKSAKKDKDPVNKSGGKAKKKKWSKG. Residues 27–37 show a composition bias toward basic residues; the sequence is GKAKKKKWSKG. Lysine 42 carries the N6-acetyllysine modification. Lysine 51 is subject to N6-acetyllysine; alternate. The residue at position 51 (lysine 51) is an N6-succinyllysine; alternate. An N6-acetyllysine mark is found at lysine 59 and lysine 65. Lysine 93 is subject to N6-acetyllysine; alternate. Lysine 93 is subject to N6-succinyllysine; alternate.

The protein belongs to the eukaryotic ribosomal protein eS25 family. As to quaternary structure, component of the small ribosomal subunit.

Its subcellular location is the cytoplasm. Functionally, component of the small ribosomal subunit. The ribosome is a large ribonucleoprotein complex responsible for the synthesis of proteins in the cell. The sequence is that of Small ribosomal subunit protein eS25 (RPS25) from Oryctolagus cuniculus (Rabbit).